The primary structure comprises 78 residues: Keratin-associated protein 6-5 (78 aa).

The segment at 3-76 (GYYGNYYGGR…GSGYGSGFGY (74 aa)) is 25 X 2 AA repeats of G-[YCGS].

This sequence belongs to the KRTAP type 6 family. Interacts with hair keratins. As to expression, strong expression in narrowly defined pattern restricted to the lower and middle cortical regions of the hair shaft in both developing and cycling hair. During hair follicle regression (catagen), expression levels decrease until expression is no longer detectable in follicles at resting stage (telogen).

Functionally, in the hair cortex, hair keratin intermediate filaments are embedded in an interfilamentous matrix, consisting of hair keratin-associated proteins (KRTAP), which are essential for the formation of a rigid and resistant hair shaft through their extensive disulfide bond cross-linking with abundant cysteine residues of hair keratins. The matrix proteins include the high-sulfur and high-glycine-tyrosine keratins. The protein is Keratin-associated protein 6-5 (Krtap6-5) of Mus musculus (Mouse).